Here is a 122-residue protein sequence, read N- to C-terminus: Biogenesis of lysosome-related organelles complex 1 subunit BLS1 (122 aa).

A Phosphoserine modification is found at Ser-33.

This sequence belongs to the BLOC1S1 family. Component of the biogenesis of lysosome-related organelles complex-1 (BLOC-1) composed of at least BLI1, BLS1, CNL1, KXD1, SNN1 and VAB2.

The protein localises to the endosome. Functionally, component of the biogenesis of lysosome-related organelles complex-1 (BLOC-1), a complex involved in endosomal cargo sorting. The sequence is that of Biogenesis of lysosome-related organelles complex 1 subunit BLS1 (BLS1) from Saccharomyces cerevisiae (strain YJM789) (Baker's yeast).